We begin with the raw amino-acid sequence, 488 residues long: 3-octaprenyl-4-hydroxybenzoate carboxy-lyase (488 aa).

Asn-172 contributes to the Mn(2+) binding site. Prenylated FMN is bound by residues Ile-175–Arg-177, Arg-189–Leu-191, and Arg-194–Gly-195. A Mn(2+)-binding site is contributed by Glu-238. Residue Asp-287 is the Proton donor of the active site.

It belongs to the UbiD family. Homohexamer. Prenylated FMN is required as a cofactor. Requires Mn(2+) as cofactor.

The protein localises to the cell membrane. It catalyses the reaction a 4-hydroxy-3-(all-trans-polyprenyl)benzoate + H(+) = a 2-(all-trans-polyprenyl)phenol + CO2. Its pathway is cofactor biosynthesis; ubiquinone biosynthesis. In terms of biological role, catalyzes the decarboxylation of 3-octaprenyl-4-hydroxy benzoate to 2-octaprenylphenol, an intermediate step in ubiquinone biosynthesis. The protein is 3-octaprenyl-4-hydroxybenzoate carboxy-lyase of Pseudomonas putida (strain ATCC 47054 / DSM 6125 / CFBP 8728 / NCIMB 11950 / KT2440).